The primary structure comprises 524 residues: Glucose-6-phosphate 1-dehydrogenase (524 aa).

The residue at position 20 (serine 20) is a Phosphoserine. NADP(+)-binding positions include 42–49, arginine 76, and lysine 175; that span reads GASGDLAK. D-glucose 6-phosphate is bound by residues lysine 175, 205-209, glutamate 243, and aspartate 262; that span reads HYLGK. Histidine 267 serves as the catalytic Proton acceptor. Arginine 362 provides a ligand contact to NADP(+). Lysine 365 and arginine 370 together coordinate D-glucose 6-phosphate. NADP(+) contacts are provided by lysine 371, arginine 375, and arginine 398. Position 400 (glutamine 400) interacts with D-glucose 6-phosphate. NADP(+) is bound by residues 406–408, 426–428, arginine 492, tyrosine 508, and tryptophan 514; these read YFK and DLT.

Belongs to the glucose-6-phosphate dehydrogenase family.

It is found in the cytoplasm. It localises to the cytosol. It catalyses the reaction D-glucose 6-phosphate + NADP(+) = 6-phospho-D-glucono-1,5-lactone + NADPH + H(+). It participates in carbohydrate degradation; pentose phosphate pathway; D-ribulose 5-phosphate from D-glucose 6-phosphate (oxidative stage): step 1/3. Functionally, cytosolic glucose-6-phosphate dehydrogenase that catalyzes the first and rate-limiting step of the oxidative branch within the pentose phosphate pathway/shunt, an alternative route to glycolysis for the dissimilation of carbohydrates and a major source of reducing power and metabolic intermediates for fatty acid and nucleic acid biosynthetic processes. This chain is Glucose-6-phosphate 1-dehydrogenase, found in Drosophila melanogaster (Fruit fly).